Consider the following 588-residue polypeptide: uncharacterized protein (588 aa).

The next 7 helical transmembrane spans lie at 14–34, 49–69, 78–98, 184–204, 235–255, 257–274, and 275–292; these read FLLF…KGIV, AVIL…IVSA, IFLC…GILG, ALVV…LVAI, VPIA…AVIG, VISS…SYQE, and SSFY…SIYD. Position 486 is a phosphoserine (serine 486). The disordered stretch occupies residues 566-588; sequence RKGSVNGSDQESQKGVSRNVDIV. Over residues 570 to 581 the composition is skewed to polar residues; it reads VNGSDQESQKGV.

The protein localises to the membrane. This is an uncharacterized protein from Arabidopsis thaliana (Mouse-ear cress).